The chain runs to 565 residues: Inositol-3-phosphate synthase (565 aa).

Residues G70, G71, N72, N73, D144, S180, I181, Q191, R194, T231, A232, N233, T234, G282, S283, D307, S310, N341, N342, D343, K356, G394, D395, D423, and S424 each coordinate NAD(+). The residue at position 536 (S536) is a Phosphoserine. The tract at residues 546 to 565 is disordered; it reads LHANGHSNGSAKLATNGNGH. Residues 550–565 are compositionally biased toward polar residues; that stretch reads GHSNGSAKLATNGNGH.

It belongs to the myo-inositol 1-phosphate synthase family. The cofactor is NAD(+). In terms of tissue distribution, higher expression in adult heads than bodies.

The protein resides in the cytoplasm. The catalysed reaction is D-glucose 6-phosphate = 1D-myo-inositol 3-phosphate. Its pathway is polyol metabolism; myo-inositol biosynthesis; myo-inositol from D-glucose 6-phosphate: step 1/2. Functionally, key enzyme in myo-inositol biosynthesis pathway that catalyzes the conversion of glucose 6-phosphate to 1-myo-inositol 1-phosphate in a NAD-dependent manner. Rate-limiting enzyme in the synthesis of all inositol-containing compounds. The chain is Inositol-3-phosphate synthase (Inos) from Drosophila melanogaster (Fruit fly).